The primary structure comprises 396 residues: Ribosomal RNA large subunit methyltransferase I (396 aa).

The 80-residue stretch at 2–81 (SVRLVLAKGR…ESIDIAFFTR (80 aa)) folds into the PUA domain.

The protein belongs to the methyltransferase superfamily. RlmI family.

It localises to the cytoplasm. It carries out the reaction cytidine(1962) in 23S rRNA + S-adenosyl-L-methionine = 5-methylcytidine(1962) in 23S rRNA + S-adenosyl-L-homocysteine + H(+). In terms of biological role, specifically methylates the cytosine at position 1962 (m5C1962) of 23S rRNA. The polypeptide is Ribosomal RNA large subunit methyltransferase I (Escherichia coli O1:K1 / APEC).